We begin with the raw amino-acid sequence, 111 residues long: Cell division protein FtsB (111 aa).

Over 1–3 (MGK) the chain is Cytoplasmic. A helical membrane pass occupies residues 4–21 (LTLLLLILLGWLQYSLWL). Residues 22–111 (GKNGIHDYVR…TNTPSNNIQR (90 aa)) are Periplasmic-facing. Residues 33–63 (KDDVVVQQGNNAKLKDRNEQLFAEIDDLNGG) adopt a coiled-coil conformation. Residues 90 to 111 (ESNHRNANTAPSTNTPSNNIQR) are disordered. Over residues 95–111 (NANTAPSTNTPSNNIQR) the composition is skewed to low complexity.

This sequence belongs to the FtsB family. Part of a complex composed of FtsB, FtsL and FtsQ.

It localises to the cell inner membrane. Its function is as follows. Essential cell division protein. May link together the upstream cell division proteins, which are predominantly cytoplasmic, with the downstream cell division proteins, which are predominantly periplasmic. This chain is Cell division protein FtsB, found in Pectobacterium carotovorum subsp. carotovorum (strain PC1).